Reading from the N-terminus, the 2570-residue chain is Highly reducing polyketide synthase tstA (2570 aa).

The region spanning 16 to 443 is the Ketosynthase family 3 (KS3) domain; that stretch reads AMPIAVVGIG…GANAHVVLEN (428 aa). Active-site for beta-ketoacyl synthase activity residues include cysteine 191, histidine 326, and histidine 366. The segment at 458–478 is disordered; sequence HTRKSATESSGTSTPSNPGPH. Residues 464–478 are compositionally biased toward low complexity; the sequence is TESSGTSTPSNPGPH. Positions 567–898 constitute a Malonyl-CoA:ACP transacylase (MAT) domain; the sequence is FVFTGQGAQW…YSALVRNKNA (332 aa). An N-terminal hotdog fold region spans residues 965-1103; sequence TDLLGVLERN…GLVSVVAPQK (139 aa). Positions 965 to 1293 constitute a PKS/mFAS DH domain; it reads TDLLGVLERN…CATLAREGAD (329 aa). Catalysis depends on histidine 997, which acts as the Proton acceptor; for dehydratase activity. Positions 1133–1293 are C-terminal hotdog fold; sequence RRNINVPQFY…CATLAREGAD (161 aa). Catalysis depends on aspartate 1198, which acts as the Proton donor; for dehydratase activity. The interval 1343-1645 is methyltransferase (CMeT) domain; it reads LERAAYYMLK…IATSINSNNY (303 aa). Positions 1866–2178 constitute an Enoyl reductase (ER) domain; the sequence is GLLDSIFWTD…TGGHMGKLVG (313 aa). The region spanning 2202–2379 is the Ketoreductase (KR) domain; sequence ASYVLIGGLG…ATTIDLGAIS (178 aa). Positions 2482–2559 constitute a Carrier domain; that stretch reads DASELILGAL…HLATKIAQRS (78 aa). Serine 2519 is subject to O-(pantetheine 4'-phosphoryl)serine.

It depends on pantetheine 4'-phosphate as a cofactor.

The protein operates within secondary metabolite biosynthesis. Its function is as follows. Highly reducing polyketide synthase; part of the gene cluster that mediates the biosynthesis of the antihypercholesterolemic agents phomoidrides which are dimeric anhydrides. The pathway begins with the highly reducing polyketide synthase tstA that catalyzes the formation of a C12-fatty acyl-ACP, starting from one acetate and 5 malonate units. The hydrolase tstM is involved in the release of the C12-fatty acyl chain from tstA. The alkylcitrate synthase (ACS) tstJ and the alkylcitrate dehydratase (ACDH) tstI then give rise to decarboxylated monomeric anhydrides by coupling the C12-fatty acyl chain with oxalacetic acid. The cyclase tstC is responsible for the dimerization of the monomeric anhydrides which leads to the production of prephomoidride that contains the characteristic bicyclo[4.3.1]deca-1,6-diene system of phomoidrides. Iterative oxidation catalyzed by the alpha-ketoglutarate-dependent dioxygenase tstK produced then phomoidride A. Finally, the methyltransferase tstE converts phomoidride A to phomoidride B via an acetalization reaction. The phosphatidylethanolamine-binding protein tstB and tstN are not essential for dimerization and their functions have still to be determined. This chain is Highly reducing polyketide synthase tstA, found in Talaromyces stipitatus (strain ATCC 10500 / CBS 375.48 / QM 6759 / NRRL 1006) (Penicillium stipitatum).